A 254-amino-acid polypeptide reads, in one-letter code: Ferritin-1, chloroplastic (254 aa).

The N-terminal 47 residues, 1-47 (MASKALSSFTAKPAVSLLPHGVSSSASPSVMSLSFSRHTGGRGVVAA), are a transit peptide targeting the chloroplast. Residues 48–86 (SSTVDTNNMPMTGVVFQPFEEVKKADLAIPITSNASLAR) are extension peptide (EP). Residues 87-240 (QRYADSSEAA…DFITQLRMVG (154 aa)) form the Ferritin-like diiron domain. Residues E104, E139, H142, E188, and Q222 each coordinate Fe cation.

The protein belongs to the ferritin family. Oligomer of 24 subunits. There are two types of subunits: L (light) chain and H (heavy) chain. The major chain can be light or heavy, depending on the species and tissue type. The functional molecule forms a roughly spherical shell with a diameter of 12 nm and contains a central cavity into which the insoluble mineral iron core is deposited.

Its subcellular location is the plastid. The protein localises to the chloroplast. It catalyses the reaction 4 Fe(2+) + O2 + 4 H(+) = 4 Fe(3+) + 2 H2O. Functionally, stores iron in a soluble, non-toxic, readily available form. Important for iron homeostasis. Has ferroxidase activity. Iron is taken up in the ferrous form and deposited as ferric hydroxides after oxidation. The polypeptide is Ferritin-1, chloroplastic (LSC30) (Brassica napus (Rape)).